The sequence spans 379 residues: Transcription factor TIP2 (379 aa).

Positions 144-184 (MVGPFESSPTPRSGGGRKRSRATAGFHGGGPANGVEKKEKQ) are disordered. Residues 173–186 (GPANGVEKKEKQRR) are basic motif; degenerate. A bHLH domain is found at 173-222 (GPANGVEKKEKQRRLRLTEKYNALMLLIPNRTKEDRATVISDAIEYIQEL). A helix-loop-helix motif region spans residues 187-222 (LRLTEKYNALMLLIPNRTKEDRATVISDAIEYIQEL).

Belongs to the bHLH protein family. Homodimer. Interacts with TDR, but not with EAT1. Highly expressed in anthers; strong expression in the middle layer and tapetum, and weak expression in the endothecium.

The protein localises to the nucleus. Transcription factor that binds to the E-box-containing promoter regions of the transcription factors TDR and EAT1, activating their expression. May have a role in specifying the cell pattern of the inner anther walls and functioning in meiosis progression. Required for male reproduction. Acts downstream of UDT1 and GAMYB, but upstream of TDR1 and EAT1 in pollen development. In Oryza sativa subsp. japonica (Rice), this protein is Transcription factor TIP2 (TIP2).